The following is a 101-amino-acid chain: NAD(P)H-quinone oxidoreductase subunit 4L, chloroplastic (101 aa).

3 helical membrane passes run 2–22 (ILEH…YGLI), 32–52 (MCLE…SDFF), and 61–81 (IFCI…LAIV).

Belongs to the complex I subunit 4L family. In terms of assembly, NDH is composed of at least 16 different subunits, 5 of which are encoded in the nucleus.

Its subcellular location is the plastid. The protein localises to the chloroplast thylakoid membrane. The enzyme catalyses a plastoquinone + NADH + (n+1) H(+)(in) = a plastoquinol + NAD(+) + n H(+)(out). It catalyses the reaction a plastoquinone + NADPH + (n+1) H(+)(in) = a plastoquinol + NADP(+) + n H(+)(out). Functionally, NDH shuttles electrons from NAD(P)H:plastoquinone, via FMN and iron-sulfur (Fe-S) centers, to quinones in the photosynthetic chain and possibly in a chloroplast respiratory chain. The immediate electron acceptor for the enzyme in this species is believed to be plastoquinone. Couples the redox reaction to proton translocation, and thus conserves the redox energy in a proton gradient. This is NAD(P)H-quinone oxidoreductase subunit 4L, chloroplastic from Crucihimalaya wallichii (Rock-cress).